The primary structure comprises 248 residues: PF03932 family protein CutC (248 aa).

Belongs to the CutC family. In terms of assembly, homodimer.

It is found in the cytoplasm. This Escherichia coli O139:H28 (strain E24377A / ETEC) protein is PF03932 family protein CutC.